The chain runs to 436 residues: Hydrogenobyrinate a,c-diamide synthase (436 aa).

The GATase cobBQ-type domain occupies 244–435; sequence RIAVARDDAF…MHVIDFSGEA (192 aa). Cys327 acts as the Nucleophile in catalysis.

Belongs to the CobB/CbiA family. Requires Mg(2+) as cofactor.

It carries out the reaction hydrogenobyrinate + 2 L-glutamine + 2 ATP + 2 H2O = hydrogenobyrinate a,c-diamide + 2 L-glutamate + 2 ADP + 2 phosphate + 2 H(+). The protein operates within cofactor biosynthesis; adenosylcobalamin biosynthesis; cob(II)yrinate a,c-diamide from precorrin-2 (aerobic route): step 9/10. Catalyzes the ATP-dependent amidation of the two carboxylate groups at positions a and c of hydrogenobyrinate, using either L-glutamine or ammonia as the nitrogen source. The polypeptide is Hydrogenobyrinate a,c-diamide synthase (Brucella suis biovar 1 (strain 1330)).